The sequence spans 709 residues: DNA ligase (709 aa).

The tract at residues 1 to 20 (MTATHRGAQADASAPAGPLP) is disordered. NAD(+)-binding positions include 52-56 (DAEYD), 101-102 (SL), and Glu-146. The active-site N6-AMP-lysine intermediate is the Lys-148. Arg-169, Glu-205, Lys-322, and Lys-346 together coordinate NAD(+). Residues Cys-440, Cys-443, Cys-458, and Cys-464 each coordinate Zn(2+). One can recognise a BRCT domain in the interval 623-709 (KAPAPLSGKT…AEAGAAPAQE (87 aa)).

This sequence belongs to the NAD-dependent DNA ligase family. LigA subfamily. It depends on Mg(2+) as a cofactor. Mn(2+) is required as a cofactor.

It carries out the reaction NAD(+) + (deoxyribonucleotide)n-3'-hydroxyl + 5'-phospho-(deoxyribonucleotide)m = (deoxyribonucleotide)n+m + AMP + beta-nicotinamide D-nucleotide.. In terms of biological role, DNA ligase that catalyzes the formation of phosphodiester linkages between 5'-phosphoryl and 3'-hydroxyl groups in double-stranded DNA using NAD as a coenzyme and as the energy source for the reaction. It is essential for DNA replication and repair of damaged DNA. The sequence is that of DNA ligase from Cupriavidus necator (strain ATCC 17699 / DSM 428 / KCTC 22496 / NCIMB 10442 / H16 / Stanier 337) (Ralstonia eutropha).